The primary structure comprises 445 residues: Probable histidine--tRNA ligase, cytoplasmic (445 aa).

This sequence belongs to the class-II aminoacyl-tRNA synthetase family.

The protein resides in the cytoplasm. It carries out the reaction tRNA(His) + L-histidine + ATP = L-histidyl-tRNA(His) + AMP + diphosphate + H(+). This Antonospora locustae (Microsporidian parasite) protein is Probable histidine--tRNA ligase, cytoplasmic.